A 179-amino-acid polypeptide reads, in one-letter code: Large ribosomal subunit protein uL5 (179 aa).

This sequence belongs to the universal ribosomal protein uL5 family. Part of the 50S ribosomal subunit; part of the 5S rRNA/L5/L18/L25 subcomplex. Contacts the 5S rRNA and the P site tRNA. Forms a bridge to the 30S subunit in the 70S ribosome.

Its function is as follows. This is one of the proteins that bind and probably mediate the attachment of the 5S RNA into the large ribosomal subunit, where it forms part of the central protuberance. In the 70S ribosome it contacts protein S13 of the 30S subunit (bridge B1b), connecting the 2 subunits; this bridge is implicated in subunit movement. Contacts the P site tRNA; the 5S rRNA and some of its associated proteins might help stabilize positioning of ribosome-bound tRNAs. This Macrococcus caseolyticus (strain JCSC5402) (Macrococcoides caseolyticum) protein is Large ribosomal subunit protein uL5.